A 62-amino-acid chain; its full sequence is Alpha-lytic protease L1 (62 aa).

S48 (charge relay system) is an active-site residue.

Belongs to the peptidase S1 family. As to quaternary structure, monomer.

Its subcellular location is the secreted. The enzyme catalyses Preferential cleavage: Ala-|-Xaa, Val-|-Xaa in bacterial cell walls, elastin and other proteins.. Inhibited by phenylmethanesulfonyl fluoride (PMSF) and p-chloromercuribenzoate (PCMB). Has bacteriolytic activity. The sequence is that of Alpha-lytic protease L1 from Lysobacter sp. (strain XL1).